Here is a 180-residue protein sequence, read N- to C-terminus: Oligoribonuclease (180 aa).

An Exonuclease domain is found at 7-170 (LIWIDLEMTG…DDIRESIAEL (164 aa)). Tyrosine 128 is a catalytic residue.

This sequence belongs to the oligoribonuclease family.

The protein localises to the cytoplasm. Its function is as follows. 3'-to-5' exoribonuclease specific for small oligoribonucleotides. This Pseudomonas paraeruginosa (strain DSM 24068 / PA7) (Pseudomonas aeruginosa (strain PA7)) protein is Oligoribonuclease.